Here is a 327-residue protein sequence, read N- to C-terminus: GMP reductase (327 aa).

Catalysis depends on Cys-176, which acts as the Thioimidate intermediate. 205–228 (IIADGGIRTHGDIAKSIRFGASMV) serves as a coordination point for NADP(+).

This sequence belongs to the IMPDH/GMPR family. GuaC type 2 subfamily.

The enzyme catalyses IMP + NH4(+) + NADP(+) = GMP + NADPH + 2 H(+). Functionally, catalyzes the irreversible NADPH-dependent deamination of GMP to IMP. It functions in the conversion of nucleobase, nucleoside and nucleotide derivatives of G to A nucleotides, and in maintaining the intracellular balance of A and G nucleotides. The sequence is that of GMP reductase from Streptococcus pyogenes serotype M5 (strain Manfredo).